The chain runs to 315 residues: Aspartate carbamoyltransferase catalytic subunit (315 aa).

Carbamoyl phosphate-binding residues include R64 and T65. K92 is a binding site for L-aspartate. Residues R114, H142, and Q145 each coordinate carbamoyl phosphate. Residues R175 and R229 each coordinate L-aspartate. Residues G270 and P271 each contribute to the carbamoyl phosphate site.

The protein belongs to the aspartate/ornithine carbamoyltransferase superfamily. ATCase family. As to quaternary structure, heterododecamer (2C3:3R2) of six catalytic PyrB chains organized as two trimers (C3), and six regulatory PyrI chains organized as three dimers (R2).

It catalyses the reaction carbamoyl phosphate + L-aspartate = N-carbamoyl-L-aspartate + phosphate + H(+). It functions in the pathway pyrimidine metabolism; UMP biosynthesis via de novo pathway; (S)-dihydroorotate from bicarbonate: step 2/3. In terms of biological role, catalyzes the condensation of carbamoyl phosphate and aspartate to form carbamoyl aspartate and inorganic phosphate, the committed step in the de novo pyrimidine nucleotide biosynthesis pathway. This chain is Aspartate carbamoyltransferase catalytic subunit, found in Methylorubrum populi (strain ATCC BAA-705 / NCIMB 13946 / BJ001) (Methylobacterium populi).